The primary structure comprises 180 residues: DNA-directed RNA polymerase subunit Rpo7 (180 aa).

Residues Gln-82–Arg-165 enclose the S1 motif domain.

The protein belongs to the eukaryotic RPB7/RPC8 RNA polymerase subunit family. As to quaternary structure, part of the 13-subunit RNA polymerase complex. Forms a stalk with Rpo4 that extends from the main structure.

The protein localises to the cytoplasm. The catalysed reaction is RNA(n) + a ribonucleoside 5'-triphosphate = RNA(n+1) + diphosphate. Its function is as follows. DNA-dependent RNA polymerase (RNAP) catalyzes the transcription of DNA into RNA using the four ribonucleoside triphosphates as substrates. The highly mobile Rpo4/Rpo7 heterodimer is conditionally required for transcription initiation. The polypeptide is DNA-directed RNA polymerase subunit Rpo7 (Saccharolobus shibatae (strain ATCC 51178 / DSM 5389 / JCM 8931 / NBRC 15437 / B12) (Sulfolobus shibatae)).